A 384-amino-acid chain; its full sequence is 1-deoxy-D-xylulose 5-phosphate reductoisomerase (384 aa).

The NADPH site is built by threonine 11, glycine 12, serine 13, isoleucine 14, lysine 38, and asparagine 123. Lysine 124 is a binding site for 1-deoxy-D-xylulose 5-phosphate. Glutamate 125 contributes to the NADPH binding site. Mn(2+) is bound at residue aspartate 148. Residues serine 149, glutamate 150, serine 174, and histidine 197 each coordinate 1-deoxy-D-xylulose 5-phosphate. Glutamate 150 provides a ligand contact to Mn(2+). Residue glycine 203 coordinates NADPH. 1-deoxy-D-xylulose 5-phosphate-binding residues include serine 210, asparagine 215, lysine 216, and glutamate 219. Mn(2+) is bound at residue glutamate 219.

This sequence belongs to the DXR family. Mg(2+) is required as a cofactor. It depends on Mn(2+) as a cofactor.

The catalysed reaction is 2-C-methyl-D-erythritol 4-phosphate + NADP(+) = 1-deoxy-D-xylulose 5-phosphate + NADPH + H(+). Its pathway is isoprenoid biosynthesis; isopentenyl diphosphate biosynthesis via DXP pathway; isopentenyl diphosphate from 1-deoxy-D-xylulose 5-phosphate: step 1/6. Its function is as follows. Catalyzes the NADPH-dependent rearrangement and reduction of 1-deoxy-D-xylulose-5-phosphate (DXP) to 2-C-methyl-D-erythritol 4-phosphate (MEP). In Halothermothrix orenii (strain H 168 / OCM 544 / DSM 9562), this protein is 1-deoxy-D-xylulose 5-phosphate reductoisomerase.